Reading from the N-terminus, the 116-residue chain is ATP-dependent Clp protease adapter protein ClpS (116 aa).

Residues 1–11 (MRRFNTIMQGK) are compositionally biased toward polar residues. The segment at 1-23 (MRRFNTIMQGKTNGGNGPESGTV) is disordered.

This sequence belongs to the ClpS family. Binds to the N-terminal domain of the chaperone ClpA.

In terms of biological role, involved in the modulation of the specificity of the ClpAP-mediated ATP-dependent protein degradation. This Brucella melitensis biotype 2 (strain ATCC 23457) protein is ATP-dependent Clp protease adapter protein ClpS.